The sequence spans 316 residues: Porphobilinogen deaminase (316 aa).

At Cys240 the chain carries S-(dipyrrolylmethanemethyl)cysteine.

The protein belongs to the HMBS family. As to quaternary structure, monomer. Dipyrromethane serves as cofactor.

It catalyses the reaction 4 porphobilinogen + H2O = hydroxymethylbilane + 4 NH4(+). Its pathway is porphyrin-containing compound metabolism; protoporphyrin-IX biosynthesis; coproporphyrinogen-III from 5-aminolevulinate: step 2/4. In terms of biological role, tetrapolymerization of the monopyrrole PBG into the hydroxymethylbilane pre-uroporphyrinogen in several discrete steps. The chain is Porphobilinogen deaminase from Alkaliphilus metalliredigens (strain QYMF).